A 448-amino-acid chain; its full sequence is Asparagine--tRNA ligase (448 aa).

It belongs to the class-II aminoacyl-tRNA synthetase family. In terms of assembly, homodimer.

It localises to the cytoplasm. The catalysed reaction is tRNA(Asn) + L-asparagine + ATP = L-asparaginyl-tRNA(Asn) + AMP + diphosphate + H(+). The chain is Asparagine--tRNA ligase from Streptococcus mutans serotype c (strain ATCC 700610 / UA159).